Here is a 108-residue protein sequence, read N- to C-terminus: Hrp pili protein HrpA (108 aa).

Polar residues predominate over residues 41-56 (NTGSTDSIDATRSSIS). A disordered region spans residues 41–72 (NTGSTDSIDATRSSISKGDAKSAELDGTANEE).

This sequence belongs to the HrpA type 1 family.

Its subcellular location is the secreted. The protein resides in the fimbrium. Its function is as follows. Major structural protein of the hrp pilus, which is a component of the type III secretion system (T3SS, Hrp secretion system) required for effector protein delivery, parasitism, and pathogenicity. The hrp pilus functions as a conduit for protein delivery into the host cell. Also, affects the expression of T3SS-associated genes. Required for full expression of genes that encode regulatory, secretion, and effector proteins of the T3SS. HrpA-mediated gene regulation apparently is through effect on the mRNA level of hrpR and hrpS. This is Hrp pili protein HrpA (hrpA) from Pseudomonas savastanoi pv. phaseolicola (Pseudomonas syringae pv. phaseolicola).